The primary structure comprises 462 residues: Mitochondrial-processing peptidase subunit beta (462 aa).

Residues 1–20 constitute a mitochondrion transit peptide; it reads MFSRTASKFRNTRRLLSTIS. Zn(2+) is bound at residue His-70. Glu-73 serves as the catalytic Proton acceptor. Zn(2+) contacts are provided by His-74 and Glu-150. Ser-243 carries the post-translational modification Phosphoserine.

This sequence belongs to the peptidase M16 family. As to quaternary structure, heterodimer of MAS2 (alpha) and MAS1 (beta) subunits, forming the mitochondrial processing protease (MPP) in which MAS2 is involved in substrate recognition and binding and MAS1 is the catalytic subunit. Zn(2+) serves as cofactor.

The protein resides in the mitochondrion matrix. It catalyses the reaction Release of N-terminal transit peptides from precursor proteins imported into the mitochondrion, typically with Arg in position P2.. With respect to regulation, binding to MAS2 is required for catalytic activity. Inhibited by high levels (&gt; 1uM) of zinc. Inhibited by metal chelators ethylenediaminetetraacetic acid (EDTA) and O-phenanthroline. Functionally, catalytic subunit of the essential mitochondrial processing protease (MPP), which cleaves the mitochondrial sequence off newly imported precursors proteins. Preferentially, cleaves after an arginine at position P2. The sequence is that of Mitochondrial-processing peptidase subunit beta from Saccharomyces cerevisiae (strain ATCC 204508 / S288c) (Baker's yeast).